Reading from the N-terminus, the 217-residue chain is Adenylate kinase (217 aa).

11–16 (GAGKGT) lines the ATP pocket. The interval 31-60 (STGDMFREAMANETPVGLEAKSYIDKGDLV) is NMP. AMP is bound by residues threonine 32, arginine 37, 58-60 (DLV), 86-89 (GFPR), and glutamine 93. An LID region spans residues 127-165 (ARYICKNCGATYNKISNPTKVEGTCDRCGGHEFFQREDD). Position 128 (arginine 128) interacts with ATP. Cysteine 131 and cysteine 134 together coordinate Zn(2+). 137–138 (TY) serves as a coordination point for ATP. Residues cysteine 151 and cysteine 154 each coordinate Zn(2+). The AMP site is built by arginine 162 and arginine 173. Glutamine 201 is a binding site for ATP.

This sequence belongs to the adenylate kinase family. Monomer.

It is found in the cytoplasm. The catalysed reaction is AMP + ATP = 2 ADP. It participates in purine metabolism; AMP biosynthesis via salvage pathway; AMP from ADP: step 1/1. In terms of biological role, catalyzes the reversible transfer of the terminal phosphate group between ATP and AMP. Plays an important role in cellular energy homeostasis and in adenine nucleotide metabolism. The polypeptide is Adenylate kinase (Lactobacillus gasseri (strain ATCC 33323 / DSM 20243 / BCRC 14619 / CIP 102991 / JCM 1131 / KCTC 3163 / NCIMB 11718 / NCTC 13722 / AM63)).